Consider the following 343-residue polypeptide: Protein RecA (343 aa).

Residue 64–71 (GPESSGKT) participates in ATP binding.

Belongs to the RecA family.

Its subcellular location is the cytoplasm. In terms of biological role, can catalyze the hydrolysis of ATP in the presence of single-stranded DNA, the ATP-dependent uptake of single-stranded DNA by duplex DNA, and the ATP-dependent hybridization of homologous single-stranded DNAs. It interacts with LexA causing its activation and leading to its autocatalytic cleavage. The polypeptide is Protein RecA (Bacillus cereus (strain ATCC 10987 / NRS 248)).